A 235-amino-acid polypeptide reads, in one-letter code: Riboflavin kinase (235 aa).

Mg(2+) contacts are provided by Thr-45 and Asn-47. Glu-140 (nucleophile) is an active-site residue.

Belongs to the flavokinase family. It depends on Zn(2+) as a cofactor. Mg(2+) is required as a cofactor.

It catalyses the reaction riboflavin + ATP = FMN + ADP + H(+). It participates in cofactor biosynthesis; FMN biosynthesis; FMN from riboflavin (ATP route): step 1/1. Functionally, catalyzes the phosphorylation of riboflavin (vitamin B2) to form flavin mononucleotide (FMN) coenzyme. This is Riboflavin kinase (FMN1) from Chaetomium globosum (strain ATCC 6205 / CBS 148.51 / DSM 1962 / NBRC 6347 / NRRL 1970) (Soil fungus).